The following is a 292-amino-acid chain: Probable septum site-determining protein MinC (292 aa).

The tract at residues 109-188 is disordered; sequence QVIDTAPPND…PQSSSALVIT (80 aa). Residues 140–150 show a composition bias toward acidic residues; that stretch reads QDDEADGEQAD. Residues 171-185 are compositionally biased toward polar residues; it reads ANRPTATPPQSSSAL.

Belongs to the MinC family. Interacts with MinD and FtsZ.

In terms of biological role, cell division inhibitor that blocks the formation of polar Z ring septums. Rapidly oscillates between the poles of the cell to destabilize FtsZ filaments that have formed before they mature into polar Z rings. Prevents FtsZ polymerization. The polypeptide is Probable septum site-determining protein MinC (Bordetella pertussis (strain Tohama I / ATCC BAA-589 / NCTC 13251)).